The sequence spans 277 residues: Uridine-cytidine kinase 1 (277 aa).

24–32 (GGTASGKST) is a binding site for ATP. Residues D81, Y109, H114, R163, R172, and Q180 each coordinate substrate. D209 is an ATP binding site. A disordered region spans residues 241 to 277 (NHGRSLKRGVAEHGENPSGSSSNLTKRPLLEPSTRPH).

This sequence belongs to the uridine kinase family.

The enzyme catalyses uridine + ATP = UMP + ADP + H(+). The catalysed reaction is cytidine + ATP = CMP + ADP + H(+). The protein operates within pyrimidine metabolism; CTP biosynthesis via salvage pathway; CTP from cytidine: step 1/3. It functions in the pathway pyrimidine metabolism; UMP biosynthesis via salvage pathway; UMP from uridine: step 1/1. Phosphorylates uridine and cytidine to uridine monophosphate and cytidine monophosphate. Does not phosphorylate deoxyribonucleosides or purine ribonucleosides. Can use ATP or GTP as a phosphate donor. The sequence is that of Uridine-cytidine kinase 1 (uck1) from Danio rerio (Zebrafish).